The sequence spans 202 residues: Protein cuti-1 (202 aa).

At 1-37 (MPNDRVAPLPPNFVYSPHDKFYYAPATCNSMHYTTAS) the chain is on the cytoplasmic side. A helical transmembrane segment spans residues 38-58 (YISAFIEFLVMGTGAICFYVM). Over 59–68 (SHKSDSIGKW) the chain is Extracellular. Residues 69 to 89 (LFYIQAGITVLSLLTSALMAF) form a helical membrane-spanning segment. At 90 to 107 (GLWKENPQMLGSKLKFIE) the chain is on the cytoplasmic side. A helical membrane pass occupies residues 108-128 (FIICFLLIWAVISIVCMAFGI). Residues 129–148 (QFTRQVFGIFGKVHRIEQDY) are Extracellular-facing. Residues 149–169 (GPIWPFNIAVVSFFTAAIAIW) form a helical membrane-spanning segment. Topologically, residues 170–202 (TRIIIQGAADYLYDKAYFADKQNVELRESSKTR) are cytoplasmic.

Interacts with vps-39.

Its subcellular location is the cell membrane. It is found in the cytoplasm. Involved in cuticle formation and ensures cuticle shedding during larval development. Plays a role in maintaining the hypodermis. In association with vps-39, may play a role in vesicle tethering. This is Protein cuti-1 from Caenorhabditis elegans.